The primary structure comprises 164 residues: Glycine cleavage system H protein, mitochondrial (164 aa).

A mitochondrion-targeting transit peptide spans Met1 to Leu39. One can recognise a Lipoyl-binding domain in the interval Ile57–Thr139. Lys98 is modified (N6-lipoyllysine).

It belongs to the GcvH family. In terms of assembly, the glycine cleavage system is composed of four proteins: P (GLDC), T (GCST), L (DLD) and H (GCSH). Interacts with GLDC. Requires (R)-lipoate as cofactor.

The protein resides in the mitochondrion. Its function is as follows. The glycine cleavage system catalyzes the degradation of glycine. The H protein (GCSH) shuttles the methylamine group of glycine from the P protein (GLDC) to the T protein (GCST). Has a pivotal role in the lipoylation of enzymes involved in cellular energetics such as the mitochondrial dihydrolipoyllysine-residue acetyltransferase component of pyruvate dehydrogenase complex (DLAT), and the mitochondrial dihydrolipoyllysine-residue succinyltransferase component of 2-oxoglutarate dehydrogenase complex (DLST). The sequence is that of Glycine cleavage system H protein, mitochondrial from Gallus gallus (Chicken).